A 654-amino-acid polypeptide reads, in one-letter code: Coiled-coil domain-containing protein 81 (654 aa).

Residues 196–270 (SRESYRKRPN…RERQSISPAK (75 aa)) are disordered. Serine 206 carries the phosphoserine modification. 2 stretches are compositionally biased toward basic and acidic residues: residues 212–222 (RIEHKETENKT) and 232–251 (GENR…EGGA). Residues serine 273, serine 275, serine 296, and serine 419 each carry the phosphoserine modification. A compositionally biased stretch (polar residues) spans 293 to 302 (ENLSSPGCQR). The interval 293–318 (ENLSSPGCQRNDNERPRTSPAPACQD) is disordered. Positions 431–562 (SQSLLKQMES…QRRDLQMLQR (132 aa)) form a coiled coil.

It localises to the cytoplasm. Its subcellular location is the cytoskeleton. The protein localises to the microtubule organizing center. It is found in the centrosome. This chain is Coiled-coil domain-containing protein 81 (Ccdc81), found in Mus musculus (Mouse).